The sequence spans 127 residues: Large ribosomal subunit protein bL19 (127 aa).

Belongs to the bacterial ribosomal protein bL19 family.

Its function is as follows. This protein is located at the 30S-50S ribosomal subunit interface and may play a role in the structure and function of the aminoacyl-tRNA binding site. The chain is Large ribosomal subunit protein bL19 from Bradyrhizobium sp. (strain BTAi1 / ATCC BAA-1182).